We begin with the raw amino-acid sequence, 502 residues long: Maturase K (502 aa).

It belongs to the intron maturase 2 family. MatK subfamily.

It is found in the plastid. Its subcellular location is the chloroplast. Its function is as follows. Usually encoded in the trnK tRNA gene intron. Probably assists in splicing its own and other chloroplast group II introns. This chain is Maturase K, found in Stanleya pinnata (Prince's plume).